Reading from the N-terminus, the 240-residue chain is Sugar fermentation stimulation protein homolog (240 aa).

It belongs to the SfsA family.

This chain is Sugar fermentation stimulation protein homolog, found in Saccharolobus islandicus (strain M.16.4 / Kamchatka #3) (Sulfolobus islandicus).